Here is a 556-residue protein sequence, read N- to C-terminus: mRNA-capping enzyme subunit beta (556 aa).

Disordered regions lie at residues 1 to 28 (MKPSRGLSLTDLVNHDDAPPLNNGDNNV) and 56 to 217 (LPPV…QKTS). Over residues 63–74 (VSTSDTGNTSHT) the composition is skewed to polar residues. The segment covering 85–96 (ESDETDTDDEPG) has biased composition (acidic residues). 2 stretches are compositionally biased toward basic and acidic residues: residues 103-131 (TKFRFDDEEQQPQKDKLVKGTSSEKKDKQ) and 139-212 (IQLD…KDIF).

It belongs to the fungal TPase family. Heterodimer. The mRNA-capping enzyme is composed of two separate chains alpha and beta, respectively a mRNA guanylyltransferase and an mRNA 5'-triphosphate monophosphatase. Mg(2+) serves as cofactor.

It is found in the nucleus. It carries out the reaction a 5'-end triphospho-ribonucleoside in mRNA + H2O = a 5'-end diphospho-ribonucleoside in mRNA + phosphate + H(+). First step of mRNA capping. Converts the 5'-triphosphate end of a nascent mRNA chain into a diphosphate end. This chain is mRNA-capping enzyme subunit beta (CET1), found in Kluyveromyces lactis (strain ATCC 8585 / CBS 2359 / DSM 70799 / NBRC 1267 / NRRL Y-1140 / WM37) (Yeast).